The following is a 93-amino-acid chain: UPF0728 protein C10orf53 (93 aa).

It belongs to the UPF0728 family.

The sequence is that of UPF0728 protein C10orf53 (C10orf53) from Homo sapiens (Human).